A 556-amino-acid chain; its full sequence is Acetyl-coenzyme A thioesterase (556 aa).

The HotDog ACOT-type 1 domain occupies 6 to 118; the sequence is APGEVLMSQA…FSTFVVKPLG (113 aa). Residue K34 is modified to N6-succinyllysine. Residues 54-56 and 83-85 each bind CoA; these read TAS and STS. At K97 the chain carries N6-succinyllysine. R145 serves as a coordination point for CoA. An N6-succinyllysine mark is found at K160 and K229. One can recognise a HotDog ACOT-type 2 domain in the interval 180-295; that stretch reads MATSVQSIEL…FLIYNAVDDQ (116 aa). CoA is bound at residue 235–237; it reads KFR. An START domain is found at 341–550; that stretch reads GTQWDISKKG…IKFIENATHD (210 aa).

In terms of assembly, homodimer or homotetramer.

It localises to the cytoplasm. The protein localises to the cytosol. It catalyses the reaction acetyl-CoA + H2O = acetate + CoA + H(+). The catalysed reaction is butanoyl-CoA + H2O = butanoate + CoA + H(+). It carries out the reaction hexanoyl-CoA + H2O = hexanoate + CoA + H(+). The protein operates within lipid metabolism; fatty acid metabolism. Allosterically regulated by ATP (activator) and ADP (inhibitor). Cold labile, it dissociates into inactive monomers at low temperature. Its function is as follows. Catalyzes the hydrolysis of acyl-CoAs into free fatty acids and coenzyme A (CoASH), regulating their respective intracellular levels. Preferentially hydrolyzes acetyl-CoA. In Rattus norvegicus (Rat), this protein is Acetyl-coenzyme A thioesterase (Acot12).